Consider the following 210-residue polypeptide: WASH complex subunit 3 (210 aa).

Residues 49–73 (EEKLASISLRIQQIETTLSILEAKL) adopt a coiled-coil conformation. Residues 173-210 (LDPNLLDTPDAPVPDAVKKNTLDQDDDSDDGSESSFSD) form a disordered region. The segment covering 195–204 (DQDDDSDDGS) has biased composition (acidic residues).

This sequence belongs to the CCDC53 family. In terms of assembly, component of the WASH complex.

The polypeptide is WASH complex subunit 3 (Salmo salar (Atlantic salmon)).